The primary structure comprises 640 residues: Protein UL35 (640 aa).

Disordered stretches follow at residues 353-373 (ERGEFGDEDEEQENDGEPREA), 500-571 (ASSS…PRQR), and 586-640 (AYSH…LRHL). Positions 358-367 (GDEDEEQEND) are enriched in acidic residues. The segment covering 500 to 562 (ASSSSASSSS…LSGSHGISSA (63 aa)) has biased composition (low complexity). Over residues 588-598 (SHHRRHRRRRS) the composition is skewed to basic residues. A compositionally biased stretch (basic and acidic residues) spans 631–640 (DDLAENLRHL).

This sequence belongs to the herpesviridae pp85 family. Interacts with UL82. Interacts with isoform UL35A. Interacts with host UBP7; this interaction significantly inhibits the ability of USP7 to form nuclear bodies. Interacts with host DCAF1 (via C-terminus). Interacts with host SNX5; this interaction allows proper gB localization during viral assembly. Interacts with host TBK1; this interaction prevents type I interferon production. In terms of assembly, interacts with UL82. Interacts with isoform UL35. Interacts with host UBP7; this interaction significantly inhibits the ability of USP7 to form nuclear bodies. Interacts with host SNX5; this interaction allows proper gB localization during viral assembly.

Its subcellular location is the virion tegument. It is found in the host nucleus. The protein resides in the host cytoplasm. Its function is as follows. Plays important role in immediate-early gene expression through interaction with UL82. Forms nuclear bodies in host nucleus, independently of PML. In turn, UL35 nuclear bodies associate with and remodel PML bodies. Through interaction with host DCAF1, causes cells to accumulate in the G2 phase of the cell cycle by inducing a DNA damage response. Regulates viral assembly by controlling the localization of the essential gB through regulation of a retrograde transport pathway. This modulation occurs via binding and inhibition of host sorting nexin 5/SNX5. Also plays a role in the inhibition of pattern recognition receptor-mediated type I interferon signaling at the level of TBK1. Functionally, promotes cytoplasmic UL82 accumulation and inhibits UL35-containing nuclear bodies formation. Regulates viral assembly by controlling the localization of the essential gB through regulation of a retrograde transport pathway. This modulation occurs via binding and inhibition of host sorting nexin 5/SNX5. The protein is Protein UL35 (UL35) of Homo sapiens (Human).